A 384-amino-acid polypeptide reads, in one-letter code: ATP phosphoribosyltransferase regulatory subunit (384 aa).

This sequence belongs to the class-II aminoacyl-tRNA synthetase family. HisZ subfamily. As to quaternary structure, heteromultimer composed of HisG and HisZ subunits.

The protein localises to the cytoplasm. The protein operates within amino-acid biosynthesis; L-histidine biosynthesis; L-histidine from 5-phospho-alpha-D-ribose 1-diphosphate: step 1/9. Its function is as follows. Required for the first step of histidine biosynthesis. May allow the feedback regulation of ATP phosphoribosyltransferase activity by histidine. This is ATP phosphoribosyltransferase regulatory subunit from Azoarcus sp. (strain BH72).